The chain runs to 252 residues: Imidazole glycerol phosphate synthase subunit HisF (252 aa).

Residues Asp-11 and Asp-130 contribute to the active site.

The protein belongs to the HisA/HisF family. Heterodimer of HisH and HisF.

It localises to the cytoplasm. The enzyme catalyses 5-[(5-phospho-1-deoxy-D-ribulos-1-ylimino)methylamino]-1-(5-phospho-beta-D-ribosyl)imidazole-4-carboxamide + L-glutamine = D-erythro-1-(imidazol-4-yl)glycerol 3-phosphate + 5-amino-1-(5-phospho-beta-D-ribosyl)imidazole-4-carboxamide + L-glutamate + H(+). Its pathway is amino-acid biosynthesis; L-histidine biosynthesis; L-histidine from 5-phospho-alpha-D-ribose 1-diphosphate: step 5/9. Its function is as follows. IGPS catalyzes the conversion of PRFAR and glutamine to IGP, AICAR and glutamate. The HisF subunit catalyzes the cyclization activity that produces IGP and AICAR from PRFAR using the ammonia provided by the HisH subunit. The protein is Imidazole glycerol phosphate synthase subunit HisF of Halothermothrix orenii (strain H 168 / OCM 544 / DSM 9562).